A 23-amino-acid polypeptide reads, in one-letter code: Dahlein-4.3 (23 aa).

As to expression, expressed by the skin dorsal glands.

It is found in the secreted. Its function is as follows. Has no antimicrobial activity. In Ranoidea dahlii (Dahl's aquatic frog), this protein is Dahlein-4.3.